The following is a 318-amino-acid chain: tRNA-cytidine(32) 2-sulfurtransferase (318 aa).

A PP-loop motif motif is present at residues 65-70; the sequence is SGGKDS. Positions 140, 143, and 231 each coordinate [4Fe-4S] cluster.

The protein belongs to the TtcA family. As to quaternary structure, homodimer. Mg(2+) is required as a cofactor. It depends on [4Fe-4S] cluster as a cofactor.

The protein resides in the cytoplasm. The catalysed reaction is cytidine(32) in tRNA + S-sulfanyl-L-cysteinyl-[cysteine desulfurase] + AH2 + ATP = 2-thiocytidine(32) in tRNA + L-cysteinyl-[cysteine desulfurase] + A + AMP + diphosphate + H(+). The protein operates within tRNA modification. In terms of biological role, catalyzes the ATP-dependent 2-thiolation of cytidine in position 32 of tRNA, to form 2-thiocytidine (s(2)C32). The sulfur atoms are provided by the cysteine/cysteine desulfurase (IscS) system. The polypeptide is tRNA-cytidine(32) 2-sulfurtransferase (Herminiimonas arsenicoxydans).